The chain runs to 309 residues: MDKIVIASRESRLAMWQAEHIQARLQALYPHLTVEILGMTTQGDQILDKTLSKIGGKGLFVKELEQALMDGRADLAVHSLKDVPMTLPDGFALAAVCEREDPRDAFVSNRYQHLSELPAGSVVGTSSLRREAQLRARFPQLAVKPLRGNVQTRLKKLDDGEFDAIILAAAGLKRLGLAERIQGELAPSESLPAAGQGALGIEIRADRADLSALLAPLNHPDTRACTAAERALAKELGGSCQVPLGAFATLADGTLTLGGLVAHPDGSVVLTASASGPADYADALGRAVAKKLIDAGARPLIAAVLAEPR.

The residue at position 240 (C240) is an S-(dipyrrolylmethanemethyl)cysteine.

The protein belongs to the HMBS family. As to quaternary structure, monomer. Dipyrromethane is required as a cofactor.

It carries out the reaction 4 porphobilinogen + H2O = hydroxymethylbilane + 4 NH4(+). It functions in the pathway porphyrin-containing compound metabolism; protoporphyrin-IX biosynthesis; coproporphyrinogen-III from 5-aminolevulinate: step 2/4. In terms of biological role, tetrapolymerization of the monopyrrole PBG into the hydroxymethylbilane pre-uroporphyrinogen in several discrete steps. The chain is Porphobilinogen deaminase from Chromobacterium violaceum (strain ATCC 12472 / DSM 30191 / JCM 1249 / CCUG 213 / NBRC 12614 / NCIMB 9131 / NCTC 9757 / MK).